The chain runs to 104 residues: Large ribosomal subunit protein uL24 (104 aa).

Belongs to the universal ribosomal protein uL24 family. Part of the 50S ribosomal subunit.

Its function is as follows. One of two assembly initiator proteins, it binds directly to the 5'-end of the 23S rRNA, where it nucleates assembly of the 50S subunit. One of the proteins that surrounds the polypeptide exit tunnel on the outside of the subunit. The protein is Large ribosomal subunit protein uL24 of Nitrobacter winogradskyi (strain ATCC 25391 / DSM 10237 / CIP 104748 / NCIMB 11846 / Nb-255).